A 359-amino-acid chain; its full sequence is Peptide chain release factor 1 (359 aa).

At Q235 the chain carries N5-methylglutamine. Residues Q283 to Y309 form a disordered region.

It belongs to the prokaryotic/mitochondrial release factor family. In terms of processing, methylated by PrmC. Methylation increases the termination efficiency of RF1.

The protein localises to the cytoplasm. Functionally, peptide chain release factor 1 directs the termination of translation in response to the peptide chain termination codons UAG and UAA. This chain is Peptide chain release factor 1, found in Brucella abortus (strain S19).